The chain runs to 388 residues: Probable peptidoglycan glycosyltransferase FtsW (388 aa).

11 helical membrane passes run 16 to 36, 54 to 74, 82 to 102, 109 to 129, 144 to 164, 167 to 187, 189 to 209, 233 to 253, 277 to 297, 310 to 330, and 342 to 362; these read LVLIVLALITIGLVMVLSSSV, VFALGVGGLFAALVLMVPSQS, WFLLGLVLLALVLIFGREIGG, LVVMNFQPAEWMKIATILFLA, TAVIRLFLPFGIMAGLLLLQP, GTTVLIAGVLVGMLFIAGAPF, YFVITVLPIGAILAVLLINSP, SQALMAIGSGGITGSGLGASV, WLGVVILLSLYGLLLWRMFAV, ALVVYGVAIMFAGQLLINVGV, and LPFVSYGGSSLMMALLAIGLV.

The protein belongs to the SEDS family. FtsW subfamily.

It localises to the cell inner membrane. It catalyses the reaction [GlcNAc-(1-&gt;4)-Mur2Ac(oyl-L-Ala-gamma-D-Glu-L-Lys-D-Ala-D-Ala)](n)-di-trans,octa-cis-undecaprenyl diphosphate + beta-D-GlcNAc-(1-&gt;4)-Mur2Ac(oyl-L-Ala-gamma-D-Glu-L-Lys-D-Ala-D-Ala)-di-trans,octa-cis-undecaprenyl diphosphate = [GlcNAc-(1-&gt;4)-Mur2Ac(oyl-L-Ala-gamma-D-Glu-L-Lys-D-Ala-D-Ala)](n+1)-di-trans,octa-cis-undecaprenyl diphosphate + di-trans,octa-cis-undecaprenyl diphosphate + H(+). It participates in cell wall biogenesis; peptidoglycan biosynthesis. Functionally, peptidoglycan polymerase that is essential for cell division. In Thiomicrospira cyclica (strain DSM 14477 / JCM 11371 / ALM1) (Thioalkalimicrobium cyclicum), this protein is Probable peptidoglycan glycosyltransferase FtsW.